The following is a 338-amino-acid chain: Probable tRNA pseudouridine synthase B (338 aa).

The active-site Nucleophile is Asp78. Residues 245 to 320 enclose the PUA domain; that stretch reads LPKIILRDSA…IAASPIRVLM (76 aa).

Belongs to the pseudouridine synthase TruB family. Type 2 subfamily.

The enzyme catalyses uridine(55) in tRNA = pseudouridine(55) in tRNA. In terms of biological role, could be responsible for synthesis of pseudouridine from uracil-55 in the psi GC loop of transfer RNAs. The protein is Probable tRNA pseudouridine synthase B of Methanosarcina acetivorans (strain ATCC 35395 / DSM 2834 / JCM 12185 / C2A).